The primary structure comprises 765 residues: Phosphoribosylformylglycinamidine synthase subunit PurL (765 aa).

His41 is a catalytic residue. Residues Tyr44 and Lys83 each contribute to the ATP site. Residue Glu85 coordinates Mg(2+). Substrate contacts are provided by residues 86–89 and Arg108; that span reads SHNH. The Proton acceptor role is filled by His87. Asp109 lines the Mg(2+) pocket. Gln232 contributes to the substrate binding site. Residue Asp260 coordinates Mg(2+). A substrate-binding site is contributed by 304 to 306; the sequence is ESQ. Residues Asp503 and Gly540 each contribute to the ATP site. A Mg(2+)-binding site is contributed by Asn541. Ser543 is a substrate binding site.

This sequence belongs to the FGAMS family. Monomer. Part of the FGAM synthase complex composed of 1 PurL, 1 PurQ and 2 PurS subunits.

The protein localises to the cytoplasm. It catalyses the reaction N(2)-formyl-N(1)-(5-phospho-beta-D-ribosyl)glycinamide + L-glutamine + ATP + H2O = 2-formamido-N(1)-(5-O-phospho-beta-D-ribosyl)acetamidine + L-glutamate + ADP + phosphate + H(+). The protein operates within purine metabolism; IMP biosynthesis via de novo pathway; 5-amino-1-(5-phospho-D-ribosyl)imidazole from N(2)-formyl-N(1)-(5-phospho-D-ribosyl)glycinamide: step 1/2. Part of the phosphoribosylformylglycinamidine synthase complex involved in the purines biosynthetic pathway. Catalyzes the ATP-dependent conversion of formylglycinamide ribonucleotide (FGAR) and glutamine to yield formylglycinamidine ribonucleotide (FGAM) and glutamate. The FGAM synthase complex is composed of three subunits. PurQ produces an ammonia molecule by converting glutamine to glutamate. PurL transfers the ammonia molecule to FGAR to form FGAM in an ATP-dependent manner. PurS interacts with PurQ and PurL and is thought to assist in the transfer of the ammonia molecule from PurQ to PurL. This is Phosphoribosylformylglycinamidine synthase subunit PurL from Synechococcus sp. (strain WH7803).